The following is a 424-amino-acid chain: Inhibin beta A chain (424 aa).

The signal sequence occupies residues 1 to 20; that stretch reads MPLLWLRGFLLASCWIIVRS. The propeptide occupies 21 to 308; that stretch reads SPTPGSEGHG…EDHPHRRRRR (288 aa). Asparagine 165 carries an N-linked (GlcNAc...) asparagine glycan. A compositionally biased stretch (basic and acidic residues) spans 264–275; the sequence is EVDGDGKKKDGS. A disordered region spans residues 264–306; it reads EVDGDGKKKDGSDGGLEEEKEQSHRPFLMLQARQSEDHPHRRR. 4 disulfide bridges follow: cysteine 312-cysteine 320, cysteine 319-cysteine 389, cysteine 348-cysteine 421, and cysteine 352-cysteine 423.

It belongs to the TGF-beta family. Dimeric, linked by one or more disulfide bonds. Inhibin A is a dimer of alpha/INHA and beta-A/INHBA. Activin A is a homodimer of beta-A/INHBA. Activin AB is a dimer of beta-A/INHBA and beta-B/INHBB. Interacts with FST and FSTL3; these interactions prevent activin A interaction to its type II receptor. Activin A interacts with ACVR2A. Activin A interacts with BMPR2. Inhibin A interacts with ACVR1; this interaction creates a non-signaling complex (NSC) that inhibits ACVR1-mediated BMP signaling. Inhibin A interacts with ACVR2A. In terms of tissue distribution, uterus, ovary and liver.

It is found in the secreted. In terms of biological role, inhibins/activins are involved in regulating a number of diverse functions such as hypothalamic and pituitary hormone secretion, gonadal hormone secretion, germ cell development and maturation, erythroid differentiation, insulin secretion, nerve cell survival, embryonic axial development or bone growth, depending on their subunit composition. Its function is as follows. Activin A is a homodimer of INHBA that plays a role in several essential biological processes including embryonic development, stem cell maintenance and differentiation, haematopoiesis, cell proliferation and tissue fibrosis. Signals through type I (such as ACVR1B or ACVR1C) and type II receptors (such as ACVR2A, ACVR2B or BMPR2) which, upon ligand binding, phosphorylate SMAD2 and SMAD3 intracellular signaling mediators that form a complex with SMAD4, translocate to the nucleus and modulate gene expression. Can also activate alternative non-canonical intracellular signaling pathways including the p38 MAPK, extracellular signal-regulated kinases 1/2 (ERK1/2) and c-Jun N-terminal kinases (JNKs) to modulate cell migration and differentiation. Alternatively, promotes osteoblastic differentiation via ACVRL1-SMAD1/5/9 pathway. In addition, can engage the type I receptor ACVR1 to form an ACVR1-activin A-type II receptor non-signaling complex (NSC) that renders receptors unavailable for engagement with BMPs, hence resulting in an apparent inhibition of ACVR1-mediated BMP signaling. Inhibin A is a dimer of alpha/INHA and beta-A/INHBA that functions as a feedback regulator in the hypothalamic-pituitary-gonadal (HPG) axis. Inhibits the secretion of FSH from the anterior pituitary gland by acting on pituitary gonadotrope cells. Antagonizes activin A by binding to the proteoglycan, betaglycan, and forming a stable complex with and, thereby, sequestering type II activin receptors while excluding type I receptor. The chain is Inhibin beta A chain (Inhba) from Mus musculus (Mouse).